Consider the following 446-residue polypeptide: GRAM domain-containing protein 2B (446 aa).

Methionine 1 is subject to N-acetylmethionine. The disordered stretch occupies residues 1–120; sequence MVKKRLPSND…RKKSSSSSQY (120 aa). Low complexity predominate over residues 29-43; that stretch reads SRSSTDSPSSVFFSS. Over residues 95 to 113 the composition is skewed to basic and acidic residues; the sequence is DKNDCKTESKNDPKTERKK. The GRAM domain maps to 124-191; sequence MHFHKLFLSV…FSVTLIKKTK (68 aa). Polar residues predominate over residues 234-247; the sequence is TSVGNSPNPSSAEN. The segment at 234–253 is disordered; the sequence is TSVGNSPNPSSAENSFRADR. Phosphoserine occurs at positions 239, 256, and 266. Positions 276–298 are disordered; that stretch reads RQDMEGYSSSGSQTPESENSRDF. The span at 282–292 shows a compositional bias: polar residues; it reads YSSSGSQTPES.

The sequence is that of GRAM domain-containing protein 2B (GRAMD2B) from Pongo abelii (Sumatran orangutan).